The following is a 761-amino-acid chain: 5-methyltetrahydropteroyltriglutamate--homocysteine methyltransferase (761 aa).

5-methyltetrahydropteroyltri-L-glutamate is bound by residues 16–19 (RELK) and Lys-118. L-homocysteine contacts are provided by residues 436–438 (IGS) and Glu-489. L-methionine is bound by residues 436–438 (IGS) and Glu-489. 5-methyltetrahydropteroyltri-L-glutamate-binding positions include 520–521 (RC) and Trp-566. An L-homocysteine-binding site is contributed by Asp-604. Asp-604 contacts L-methionine. Glu-610 provides a ligand contact to 5-methyltetrahydropteroyltri-L-glutamate. Positions 646, 648, and 670 each coordinate Zn(2+). The active-site Proton donor is the His-699. Residue Cys-731 participates in Zn(2+) binding.

It belongs to the vitamin-B12 independent methionine synthase family. Requires Zn(2+) as cofactor.

It catalyses the reaction 5-methyltetrahydropteroyltri-L-glutamate + L-homocysteine = tetrahydropteroyltri-L-glutamate + L-methionine. It participates in amino-acid biosynthesis; L-methionine biosynthesis via de novo pathway; L-methionine from L-homocysteine (MetE route): step 1/1. In terms of biological role, catalyzes the transfer of a methyl group from 5-methyltetrahydrofolate to homocysteine resulting in methionine formation. This chain is 5-methyltetrahydropteroyltriglutamate--homocysteine methyltransferase, found in Vibrio cholerae serotype O1 (strain ATCC 39315 / El Tor Inaba N16961).